We begin with the raw amino-acid sequence, 452 residues long: MALPVVAIIGRPNVGKSTLVNRLCRSRDAIVHDEPGVTRDRTYQEGFWGGRTFRVVDTGGLVFDDDSEFLPEIREQASLAMAEACVALVIVDGQQGLTAADEAIAAWLRQQKCPVLLGVNKCESPEQGLAMAAEFWALGLGEPKPISAIHGAGTGDLLDQVLDFLPPQDEEEAPEPIQMAIVGRPNVGKSSLLNTVCGENRAIVSPIRGTTRDTIDTSIEREGQSWKLLDTAGIRRRRSVNYGPEFFGINRSFKAIERSDVCVLVIDAEEGVTEQDQRLAGRIEEEGRACLVVVNKWDLVEKDSHTMPAMEKELRSKLYFLEWAPMLFISALTGQRVERIFPLAVLAVEQHRRRVTTAVVNEVLQEALSWRSPPTTRGGRQGRLYYGTQVAVRPPSFTLFVNEPKLFGDTYRRYVERQIRQGLGFEGSPVRLFWRGKQQRDAERDQARAASR.

2 consecutive EngA-type G domains span residues 4–169 (PVVA…PPQD) and 177–352 (IQMA…EQHR). GTP is bound by residues 10–17 (GRPNVGKS), 57–61 (DTGGL), 120–123 (NKCE), 183–190 (GRPNVGKS), 230–234 (DTAGI), and 295–298 (NKWD). A KH-like domain is found at 353 to 438 (RRVTTAVVNE…PVRLFWRGKQ (86 aa)).

It belongs to the TRAFAC class TrmE-Era-EngA-EngB-Septin-like GTPase superfamily. EngA (Der) GTPase family. As to quaternary structure, associates with the 50S ribosomal subunit.

Functionally, GTPase that plays an essential role in the late steps of ribosome biogenesis. The protein is GTPase Der of Synechococcus sp. (strain RCC307).